The primary structure comprises 670 residues: DNA ligase (670 aa).

Residues 35–39 (DSVYD), 84–85 (SL), and glutamate 116 each bind NAD(+). Lysine 118 acts as the N6-AMP-lysine intermediate in catalysis. Arginine 139, glutamate 176, lysine 293, and lysine 317 together coordinate NAD(+). 4 residues coordinate Zn(2+): cysteine 411, cysteine 414, cysteine 429, and cysteine 435. Residues 592–670 (VVKSEIAGKT…EEAFLKLLKS (79 aa)) enclose the BRCT domain.

It belongs to the NAD-dependent DNA ligase family. LigA subfamily. Mg(2+) serves as cofactor. Mn(2+) is required as a cofactor.

The enzyme catalyses NAD(+) + (deoxyribonucleotide)n-3'-hydroxyl + 5'-phospho-(deoxyribonucleotide)m = (deoxyribonucleotide)n+m + AMP + beta-nicotinamide D-nucleotide.. Functionally, DNA ligase that catalyzes the formation of phosphodiester linkages between 5'-phosphoryl and 3'-hydroxyl groups in double-stranded DNA using NAD as a coenzyme and as the energy source for the reaction. It is essential for DNA replication and repair of damaged DNA. The chain is DNA ligase from Coxiella burnetii (strain RSA 331 / Henzerling II).